The primary structure comprises 223 residues: Translation initiation factor 6 (223 aa).

Belongs to the eIF-6 family.

Binds to the 50S ribosomal subunit and prevents its association with the 30S ribosomal subunit to form the 70S initiation complex. This is Translation initiation factor 6 from Saccharolobus islandicus (strain Y.N.15.51 / Yellowstone #2) (Sulfolobus islandicus).